Reading from the N-terminus, the 389-residue chain is Cytochrome f (389 aa).

Residues 1-42 form the signal peptide; it reads MTTFFISKVNGPVNKSLIWLKIHIYEFFLLKFMLLFPPTVCS. Heme-binding residues include Tyr-105, Cys-125, Cys-128, and His-129. Residues 355-375 traverse the membrane as a helical segment; it reads LQALIVFFIFVILTQLFLVLK.

It belongs to the cytochrome f family. In terms of assembly, the 4 large subunits of the cytochrome b6-f complex are cytochrome b6, subunit IV (17 kDa polypeptide, petD), cytochrome f and the Rieske protein, while the 4 small subunits are PetG, PetL, PetM and PetN. The complex functions as a dimer. Requires heme as cofactor.

It localises to the plastid. The protein localises to the chloroplast thylakoid membrane. In terms of biological role, component of the cytochrome b6-f complex, which mediates electron transfer between photosystem II (PSII) and photosystem I (PSI), cyclic electron flow around PSI, and state transitions. This chain is Cytochrome f, found in Pleurastrum terricola (Filamentous green alga).